Consider the following 262-residue polypeptide: High-affinity zinc uptake system membrane protein ZnuB (262 aa).

7 helical membrane-spanning segments follow: residues G8–W28, I54–L74, T84–I104, I129–I149, F179–I199, V215–F235, and T238–I254.

Belongs to the ABC-3 integral membrane protein family.

The protein localises to the cell membrane. Involved in the high-affinity zinc uptake transport system. In Buchnera aphidicola subsp. Acyrthosiphon pisum (strain APS) (Acyrthosiphon pisum symbiotic bacterium), this protein is High-affinity zinc uptake system membrane protein ZnuB (znuB).